The primary structure comprises 175 residues: Lithostathine (175 aa).

Positions Met1–Gly26 are cleaved as a signal peptide. A propeptide spanning residues Glu27–Arg37 is cleaved from the precursor. Residues Ile38–Phe173 enclose the C-type lectin domain. Disulfide bonds link Cys40–Cys51, Cys68–Cys171, and Cys146–Cys163.

As to quaternary structure, cleaved to give an A chain and a B chain joined by a disulfide bond. In pancreatic acinar cells.

It localises to the secreted. Functionally, might act as an inhibitor of spontaneous calcium carbonate precipitation. This Bos taurus (Bovine) protein is Lithostathine (PTP).